The following is an 82-amino-acid chain: Small ribosomal subunit protein eS21y (82 aa).

Position 1 is an N-acetylmethionine (Met1).

It belongs to the eukaryotic ribosomal protein eS21 family.

In Arabidopsis thaliana (Mouse-ear cress), this protein is Small ribosomal subunit protein eS21y (RPS21C).